The following is a 699-amino-acid chain: Probable xyloglucan glycosyltransferase 12 (699 aa).

A run of 2 helical transmembrane segments spans residues Cys-126–Phe-146 and Ile-194–Ile-214. Residue Asp-280 is part of the active site. Residues Asp-339 and Asp-341 each coordinate substrate. Asp-433 is a catalytic residue. 2 helical membrane-spanning segments follow: residues Leu-511–Val-531 and Leu-536–Ala-556. The interval Glu-616–His-646 is disordered. Residues Lys-617 and Lys-620 each participate in a glycyl lysine isopeptide (Lys-Gly) (interchain with G-Cter in ubiquitin) cross-link. A Phosphoserine modification is found at Ser-626. Over residues Glu-637–His-646 the composition is skewed to basic residues. Helical transmembrane passes span Ile-649–Leu-668 and Ile-674–Ile-694.

The protein belongs to the glycosyltransferase 2 family. Plant cellulose synthase-like C subfamily. In terms of assembly, homodimer. Mainly expressed in roots, flowers and seeds, and, at very low levels, in seedlings, leaves and stems.

It localises to the golgi apparatus membrane. Probable beta-1,4-glucan synthase rather involved in the synthesis of the xyloglucan backbone than cellulose. Seems to work simultaneously with xyloglucan 6-xylosyltransferase. Xyloglucan is a noncellulosic polysaccharides of plant cell wall and consists of a glucan backbone substituted by xylose, galactose and fucose. The sequence is that of Probable xyloglucan glycosyltransferase 12 from Arabidopsis thaliana (Mouse-ear cress).